Reading from the N-terminus, the 210-residue chain is Probable nicotinate-nucleotide adenylyltransferase (210 aa).

Belongs to the NadD family.

The catalysed reaction is nicotinate beta-D-ribonucleotide + ATP + H(+) = deamido-NAD(+) + diphosphate. The protein operates within cofactor biosynthesis; NAD(+) biosynthesis; deamido-NAD(+) from nicotinate D-ribonucleotide: step 1/1. In terms of biological role, catalyzes the reversible adenylation of nicotinate mononucleotide (NaMN) to nicotinic acid adenine dinucleotide (NaAD). The polypeptide is Probable nicotinate-nucleotide adenylyltransferase (Streptococcus pyogenes serotype M18 (strain MGAS8232)).